The following is a 337-amino-acid chain: Beta-ketoacyl-[acyl-carrier-protein] synthase III (337 aa).

Residues Cys-119 and His-260 contribute to the active site. The interval 261 to 265 is ACP-binding; that stretch reads QANQR. Residue Asn-290 is part of the active site.

The protein belongs to the thiolase-like superfamily. FabH family. As to quaternary structure, homodimer.

It is found in the cytoplasm. The enzyme catalyses malonyl-[ACP] + acetyl-CoA + H(+) = 3-oxobutanoyl-[ACP] + CO2 + CoA. Its pathway is lipid metabolism; fatty acid biosynthesis. Its function is as follows. Catalyzes the condensation reaction of fatty acid synthesis by the addition to an acyl acceptor of two carbons from malonyl-ACP. Catalyzes the first condensation reaction which initiates fatty acid synthesis and may therefore play a role in governing the total rate of fatty acid production. Possesses both acetoacetyl-ACP synthase and acetyl transacylase activities. Its substrate specificity determines the biosynthesis of branched-chain and/or straight-chain of fatty acids. The protein is Beta-ketoacyl-[acyl-carrier-protein] synthase III of Synechococcus sp. (strain WH7803).